A 559-amino-acid chain; its full sequence is Vacuolar protein 8 (559 aa).

A lipid anchor (N-myristoyl glycine) is attached at G2. Residue C4 is the site of S-palmitoyl cysteine attachment. 8 ARM repeats span residues 77–116, 118–157, 159–198, 200–239, 243–282, 284–323, 325–365, and 409–448; these read TERD…NLAV, TENK…NLAT, EENK…NMTH, DENR…NIAV, NRRK…NLAS, EKYQ…NISI, PMNE…NLAA, and DDLK…NLSS.

This sequence belongs to the beta-catenin family.

The protein resides in the vacuole membrane. Functionally, functions in both vacuole inheritance and protein targeting from the cytoplasm to vacuole. The sequence is that of Vacuolar protein 8 (VAC8) from Gibberella zeae (strain ATCC MYA-4620 / CBS 123657 / FGSC 9075 / NRRL 31084 / PH-1) (Wheat head blight fungus).